The chain runs to 148 residues: Small ribosomal subunit protein bS6 (148 aa).

A disordered region spans residues 96-148; that stretch reads HEEGQSAMLTRRDDRRERDGDDRPRRREGGFDRGDRGDRGPRRPRDNEAGEGA.

It belongs to the bacterial ribosomal protein bS6 family.

Binds together with bS18 to 16S ribosomal RNA. In Brucella abortus biovar 1 (strain 9-941), this protein is Small ribosomal subunit protein bS6.